The sequence spans 226 residues: Lysoplasmalogenase TMEM86B (226 aa).

The Cytoplasmic segment spans residues 1–23 (MDARKEGLPLETLFSDQYPQVRR). A helical transmembrane segment spans residues 24–40 (WLAPFILACSLYFLLWI). The Extracellular portion of the chain corresponds to 41 to 46 (PVDQPS). Residues 47–68 (WVSALIKCQPILCLVVFLWAVA) traverse the membrane as a helical segment. At 69 to 74 (PGGSST) the chain is on the cytoplasmic side. A helical transmembrane segment spans residues 75 to 93 (WLLQGALVCSAVGDACLIW). The Extracellular segment spans residues 94-99 (PEAFFY). The helical transmembrane segment at 100–117 (GTAAFSVAHLFYLGAFGL) threads the bilayer. At 118–123 (TPLQPG) the chain is on the cytoplasmic side. Residues 124–140 (LLLCTTLASLTYYSFLL) form a helical membrane-spanning segment. The Extracellular portion of the chain corresponds to 141–146 (LHLEQG). The chain crosses the membrane as a helical span at residues 147–163 (MVLPVMAYGLILNSMLW). Over 164–171 (RSLVWGGS) the chain is Cytoplasmic. Residues 172-188 (ASWGAVLFTFSDGVLAW) form a helical membrane-spanning segment. The Extracellular segment spans residues 189-199 (DTFVYSLPFAR). The chain crosses the membrane as a helical span at residues 200–218 (LVTMSTYYAAQLLLILSAL). The Cytoplasmic segment spans residues 219–226 (RNPGLKTH).

It belongs to the TMEM86 family. In terms of assembly, homodimer. Enriched in liver. Also detected in brain and testis.

It localises to the endoplasmic reticulum membrane. The protein localises to the cytoplasm. The catalysed reaction is a 1-O-(1Z-alkenyl)-sn-glycero-3-phosphocholine + H2O = a 2,3-saturated aldehyde + sn-glycerol 3-phosphocholine. It carries out the reaction a 1-O-(1Z-alkenyl)-sn-glycero-3-phosphoethanolamine + H2O = a 2,3-saturated aldehyde + sn-glycero-3-phosphoethanolamine. Its activity is regulated as follows. Competitively inhibited by lysophosphatidic acid. Its function is as follows. Catalyzes the hydrolysis of the vinyl ether bond of choline or ethanolamine lysoplasmalogens, forming fatty aldehyde and glycerophosphocholine or glycerophosphoethanolamine, respectively and is specific for the sn-2-deacylated (lyso) form of plasmalogen. This Mus musculus (Mouse) protein is Lysoplasmalogenase TMEM86B (Tmem86b).